A 714-amino-acid polypeptide reads, in one-letter code: Testis-expressed protein 13D (714 aa).

2 disordered regions span residues 300–419 (GSFP…GCSD) and 431–675 (RRCK…PASF). Basic and acidic residues-rich tracts occupy residues 307-320 (SRSH…ERSQ) and 366-378 (GNRE…EGPK). Basic residues predominate over residues 379–392 (RARRMHTLVFRRSH). A compositionally biased stretch (polar residues) spans 403-416 (TVPQGDSRSYSQEG). 3 stretches are compositionally biased toward basic and acidic residues: residues 495 to 505 (CKPEEGPERPQ), 557 to 567 (CKPEEGPERPQ), and 636 to 646 (SRSHGVRESPK). The segment at 677–706 (VPVNWKCPWCKAINFSWRTACYKCKKACVP) adopts a RanBP2-type zinc-finger fold.

The protein belongs to the TEX13 family.

This chain is Testis-expressed protein 13D, found in Homo sapiens (Human).